The sequence spans 238 residues: Ribonuclease 3 (238 aa).

The RNase III domain occupies 9 to 141 (LIDFMEKIGY…VVAAVYIDGG (133 aa)). E54 contributes to the Mg(2+) binding site. The active site involves D58. D127 and E130 together coordinate Mg(2+). The active site involves E130. The region spanning 168 to 237 (DYKTSLQEIT…ARRAIEKLKG (70 aa)) is the DRBM domain.

Belongs to the ribonuclease III family. As to quaternary structure, homodimer. Requires Mg(2+) as cofactor.

Its subcellular location is the cytoplasm. The catalysed reaction is Endonucleolytic cleavage to 5'-phosphomonoester.. Digests double-stranded RNA. Involved in the processing of primary rRNA transcript to yield the immediate precursors to the large and small rRNAs (23S and 16S). Processes some mRNAs, and tRNAs when they are encoded in the rRNA operon. Processes pre-crRNA and tracrRNA of type II CRISPR loci if present in the organism. The chain is Ribonuclease 3 from Pseudothermotoga lettingae (strain ATCC BAA-301 / DSM 14385 / NBRC 107922 / TMO) (Thermotoga lettingae).